Here is a 23-residue protein sequence, read N- to C-terminus: Testis ecdysiotropin peptide B (23 aa).

In terms of biological role, stimulates synthesis of ecdysteroid in the testes of larvae and pupae. The sequence is that of Testis ecdysiotropin peptide B from Lymantria dispar (Gypsy moth).